Reading from the N-terminus, the 608-residue chain is Nuclear protein localization protein 4 homolog (608 aa).

The residue at position 2 (Ala2) is an N-acetylalanine. The residue at position 179 (Lys179) is an N6-acetyllysine. Residues 226–363 enclose the MPN domain; the sequence is IMFENHTVAD…MCRLSPDGHF (138 aa). The RanBP2-type zinc-finger motif lies at 580–608; that stretch reads TAAMWACQHCTFMNQPGTGHCEMCSLPRT.

Belongs to the NPL4 family. In terms of assembly, heterodimer with UFD1. The heterodimer binds ubiquitinated proteins. The heterodimer binds to VCP and inhibits Golgi membrane fusion. Interacts with ZFAND2B; probably through VCP. As to expression, expressed at highest levels in brain, heart, skeletal muscle, kidney and fetal liver.

It is found in the cytoplasm. The protein localises to the cytosol. It localises to the endoplasmic reticulum. The protein resides in the nucleus. The protein operates within protein degradation; proteasomal ubiquitin-dependent pathway. Its function is as follows. The ternary complex containing UFD1, VCP and NPLOC4 binds ubiquitinated proteins and is necessary for the export of misfolded proteins from the ER to the cytoplasm, where they are degraded by the proteasome. The NPLOC4-UFD1-VCP complex regulates spindle disassembly at the end of mitosis and is necessary for the formation of a closed nuclear envelope. Acts as a negative regulator of type I interferon production via the complex formed with VCP and UFD1, which binds to RIGI and recruits RNF125 to promote ubiquitination and degradation of RIGI. This is Nuclear protein localization protein 4 homolog (NPLOC4) from Homo sapiens (Human).